Consider the following 392-residue polypeptide: THO complex subunit MFT1 (392 aa).

Acidic residues-rich tracts occupy residues 258–271 and 290–330; these read DNID…EDEE and NVDE…EVDG. The disordered stretch occupies residues 258-392; the sequence is DNIDEDYESD…SASSSVEEVK (135 aa). Phosphoserine is present on S266. Residues 331–344 show a composition bias toward polar residues; that stretch reads ESSQQEDNSRQGNN. The span at 345-367 shows a compositional bias: acidic residues; that stretch reads EETDKETGVIEEPDAVNDAEEAD. The segment covering 377-392 has biased composition (polar residues); it reads GTTSDFSASSSVEEVK.

As to quaternary structure, component of the THO complex, which is composed of HPR1, MFT1, THO2 and THP2. Together with SUB2, TEX1 and YRA1, THO forms the transcription/export (TREX) complex. THO associates with DNA and RNA in vitro.

The protein localises to the nucleus. Component the THO subcomplex of the TREX complex, which operates in coupling transcription elongation to mRNA export. The THO complex is recruited to transcribed genes and moves along the gene with the elongating polymerase during transcription. THO is important for stabilizing nascent RNA in the RNA polymerase II elongation complex by preventing formation of DNA:RNA hybrids behind the elongating polymerase. It functions in cotranscriptional formation of an export-competent messenger ribonucleoprotein particle (mRNP) by facilitating the loading of ATP-dependent RNA helicase SUB2 and the mRNA export factor YRA1 along the nascent mRNA. This Saccharomyces cerevisiae (strain ATCC 204508 / S288c) (Baker's yeast) protein is THO complex subunit MFT1 (MFT1).